Consider the following 1282-residue polypeptide: Indigoidine synthase (1282 aa).

The interval 24–379 is adenylation; that stretch reads AQRVAEHPEA…GGIQLARGYL (356 aa). In terms of domain architecture, Carrier spans 937-1012; sequence APRTETEKEI…KLARRLEREV (76 aa). Ser972 carries the O-(pantetheine 4'-phosphoryl)serine modification. A thioesterase region spans residues 1030–1138; sequence RPVICWPGLG…APGSPKVRAE (109 aa).

It belongs to the ATP-dependent AMP-binding enzyme family. Pantetheine 4'-phosphate serves as cofactor.

It carries out the reaction 2 FMN + 2 L-glutamine + 2 ATP + O2 = indigoidine + 2 FMNH2 + 2 AMP + 2 diphosphate + 2 H2O. It catalyses the reaction FMN + L-glutamine + ATP = 3-amino-1,5-dihydropyridine-2,6-dione + FMNH2 + AMP + diphosphate. The enzyme catalyses 2 3-amino-1,5-dihydropyridine-2,6-dione + O2 = indigoidine + 2 H2O. It functions in the pathway pigment biosynthesis. Nonribosomal peptide synthetase involved in the biosynthesis of the blue pigment indigoidine. Catalyzes the synthesis of the blue pigment using L-Gln as a substrate. Two glutamine molecules are cyclized and oxidized to form indigoidine. This is Indigoidine synthase from Streptomyces lavendulae.